A 395-amino-acid chain; its full sequence is Imidazolonepropionase (395 aa).

Fe(3+) is bound by residues H63 and H65. Zn(2+)-binding residues include H63 and H65. The 4-imidazolone-5-propanoate site is built by R72, Y135, and H168. Y135 lines the N-formimidoyl-L-glutamate pocket. H233 contacts Fe(3+). A Zn(2+)-binding site is contributed by H233. Q236 contributes to the 4-imidazolone-5-propanoate binding site. D308 contacts Fe(3+). D308 lines the Zn(2+) pocket. Residues N310 and G312 each contribute to the N-formimidoyl-L-glutamate site. T313 is a 4-imidazolone-5-propanoate binding site.

It belongs to the metallo-dependent hydrolases superfamily. HutI family. Requires Zn(2+) as cofactor. It depends on Fe(3+) as a cofactor.

It is found in the cytoplasm. The enzyme catalyses 4-imidazolone-5-propanoate + H2O = N-formimidoyl-L-glutamate. The protein operates within amino-acid degradation; L-histidine degradation into L-glutamate; N-formimidoyl-L-glutamate from L-histidine: step 3/3. Catalyzes the hydrolytic cleavage of the carbon-nitrogen bond in imidazolone-5-propanoate to yield N-formimidoyl-L-glutamate. It is the third step in the universal histidine degradation pathway. In Cereibacter sphaeroides (strain ATCC 17029 / ATH 2.4.9) (Rhodobacter sphaeroides), this protein is Imidazolonepropionase.